A 193-amino-acid chain; its full sequence is MSLDTVVEDIRDEAQARASEIQADADERAEKIIEEAEADAEDILEERKDEVEEQIEREREQALSSANLEAKQNRLEARRDVLDDVLNRVEDELASLSNAKREELTKPLVTAAITEFDDDETVKLYARADDADLLNSLLEEHEKAEYAGEYDCLGGVVAEGQQSRVRVNNTFDSILDAVWEETLGDVSEQLFDQ.

It belongs to the V-ATPase E subunit family. Has multiple subunits with at least A(3), B(3), C, D, E, F, H, I and proteolipid K(x).

It is found in the cell membrane. Its function is as follows. Component of the A-type ATP synthase that produces ATP from ADP in the presence of a proton gradient across the membrane. This chain is A-type ATP synthase subunit E, found in Haloquadratum walsbyi (strain DSM 16790 / HBSQ001).